The following is a 90-amino-acid chain: MSSTSQKHKDFVAEPMGEKSVMALAGIGEVLGKRLEEKGFDKAYVVLGQFLVLRKDEELFREWLKDTCGANTKQQGDCYSCLREWCDSFL.

Phosphoserine is present on residues serine 2 and serine 3. Threonine 4 is subject to Phosphothreonine. Phosphoserine is present on serine 5.

This sequence belongs to the BAF family. Homodimer.

Its subcellular location is the nucleus. The protein localises to the chromosome. It is found in the nucleus envelope. The protein resides in the cytoplasm. Its function is as follows. Non-specific DNA-binding protein that plays key roles in mitotic nuclear reassembly, chromatin organization, DNA damage response, gene expression and intrinsic immunity against foreign DNA. Contains two non-specific double-stranded DNA (dsDNA)-binding sites which promote DNA cross-bridging. Plays a key role in nuclear membrane reformation at the end of mitosis by driving formation of a single nucleus in a spindle-independent manner. Transiently cross-bridges anaphase chromosomes via its ability to bridge distant DNA sites, leading to the formation of a dense chromatin network at the chromosome ensemble surface that limits membranes to the surface. Also acts as a negative regulator of innate immune activation by restricting CGAS activity toward self-DNA upon acute loss of nuclear membrane integrity. Outcompetes CGAS for DNA-binding, thereby preventing CGAS activation and subsequent damaging autoinflammatory responses. Also involved in DNA damage response; acts by inhibiting the ADP-ribosyltransferase activity of PARP1. Involved in the recognition of exogenous dsDNA in the cytosol: associates with exogenous dsDNA immediately after its appearance in the cytosol at endosome breakdown and is required to avoid autophagy. This Danio rerio (Zebrafish) protein is Barrier-to-autointegration factor (banf1).